The sequence spans 855 residues: DNA polymerase (855 aa).

A 3'-5' exonuclease domain is found at 107 to 332 (KPEMKPVFDA…LHNFFLPKIE (226 aa)). The polymerase stretch occupies residues 333–833 (KNEKLCSLYY…MDKEHPDHSK (501 aa)).

It belongs to the DNA polymerase type-A family. In terms of assembly, single-chain monomer with multiple functions.

The enzyme catalyses DNA(n) + a 2'-deoxyribonucleoside 5'-triphosphate = DNA(n+1) + diphosphate. Functionally, replicates the viral genomic DNA. This polymerase possesses two enzymatic activities: DNA synthesis (polymerase) and an exonucleolytic activity that degrades single-stranded DNA in the 3'-5' direction for proofreading purpose. The DNA synthesis very likely occurs by strand displacement. This chain is DNA polymerase, found in Escherichia phage T5 (Enterobacteria phage T5).